Consider the following 424-residue polypeptide: CinA-like protein (424 aa).

It belongs to the CinA family.

The protein is CinA-like protein of Prochlorococcus marinus (strain MIT 9215).